The chain runs to 334 residues: S-adenosylmethionine decarboxylase proenzyme 2 (334 aa).

Phe7 provides a ligand contact to substrate. Residues Glu8 and Glu11 contribute to the active site. Glu67 provides a ligand contact to substrate. Catalysis depends on Ser68, which acts as the Schiff-base intermediate with substrate; via pyruvic acid. Ser68 carries the post-translational modification Pyruvic acid (Ser); by autocatalysis. Cys82 serves as the catalytic Proton donor; for catalytic activity. Phe223 contacts substrate. Residues Ser229 and His243 each act as proton acceptor; for processing activity in the active site. Substrate is bound at residue Glu247. Ser298 carries the post-translational modification Phosphoserine.

Belongs to the eukaryotic AdoMetDC family. In terms of assembly, heterotetramer of two alpha and two beta chains. The cofactor is pyruvate. Post-translationally, is synthesized initially as an inactive proenzyme. Formation of the active enzyme involves a self-maturation process in which the active site pyruvoyl group is generated from an internal serine residue via an autocatalytic post-translational modification. Two non-identical subunits are generated from the proenzyme in this reaction, and the pyruvate is formed at the N-terminus of the alpha chain, which is derived from the carboxyl end of the proenzyme. The post-translation cleavage follows an unusual pathway, termed non-hydrolytic serinolysis, in which the side chain hydroxyl group of the serine supplies its oxygen atom to form the C-terminus of the beta chain, while the remainder of the serine residue undergoes an oxidative deamination to produce ammonia and the pyruvoyl group blocking the N-terminus of the alpha chain.

It catalyses the reaction S-adenosyl-L-methionine + H(+) = S-adenosyl 3-(methylsulfanyl)propylamine + CO2. It participates in amine and polyamine biosynthesis; S-adenosylmethioninamine biosynthesis; S-adenosylmethioninamine from S-adenosyl-L-methionine: step 1/1. Functionally, essential for biosynthesis of the polyamines spermidine and spermine. Promotes maintenance and self-renewal of embryonic stem cells, by maintaining spermine levels. This is S-adenosylmethionine decarboxylase proenzyme 2 (Amd2) from Mus spretus (Western Mediterranean mouse).